A 543-amino-acid polypeptide reads, in one-letter code: MNSHSYNGSVGRPLGSGPGALGRDPPDPEAGHPPQPPHSPGLQVVVAKSEPARPSPGSPRGQPQDQDDDEDDEEDEAGRQRASGKPSNVGHRLGHRRALFEKRKRLSDYALIFGMFGIVVMVTETELSWGVYTKESLYSFALKCLISLSTAILLGLVVLYHAREIQLFMVDNGADDWRIAMTCERVFLISLELAVCAIHPVPGHYRFTWTARLAFTYAPSVAEADVDVLLSIPMFLRLYLLGRVMLLHSKIFTDASSRSIGALNKITFNTRFVMKTLMTICPGTVLLVFSISSWIIAAWTVRVCERYHDKQEVTSNFLGAMWLISITFLSIGYGDMVPHTYCGKGVCLLTGIMGAGCTALVVAVVARKLELTKAEKHVHNFMMDTQLTKRVKNAAANVLRETWLIYKHTRLVKKPDQARVRKHQRKFLQAIHQAQKLRSVKIEQGKLNDQANTLTDLAKTQTVMYDLVSELHAQHEELEARLATLESRLDALGASLQALPGLIAQAIRPPPPPLPPRPGPGPQDQAARSSPCRWTPVAPSDCG.

A disordered region spans residues 1–92 (MNSHSYNGSV…SGKPSNVGHR (92 aa)). Residues 65 to 76 (DQDDDEDDEEDE) show a composition bias toward acidic residues. Residues 111–131 (LIFGMFGIVVMVTETELSWGV) traverse the membrane as a helical segment. The helical transmembrane segment at 140–160 (FALKCLISLSTAILLGLVVLY) threads the bilayer. A helical transmembrane segment spans residues 179–199 (IAMTCERVFLISLELAVCAIH). The chain crosses the membrane as a helical span at residues 228–248 (VLLSIPMFLRLYLLGRVMLLH). A helical membrane pass occupies residues 277–297 (LMTICPGTVLLVFSISSWIIA). An intramembrane region (pore-forming) is located at residues 317–337 (FLGAMWLISITFLSIGYGDMV). The chain crosses the membrane as a helical span at residues 346-366 (VCLLTGIMGAGCTALVVAVVA). A calmodulin-binding region spans residues 384–463 (DTQLTKRVKN…LTDLAKTQTV (80 aa)). The interval 505 to 543 (QAIRPPPPPLPPRPGPGPQDQAARSSPCRWTPVAPSDCG) is disordered. The segment covering 508–521 (RPPPPPLPPRPGPG) has biased composition (pro residues).

The protein belongs to the potassium channel KCNN family. KCa2.1/KCNN1 subfamily. As to quaternary structure, homodimer. Heteromultimer with KCNN2 and KCNN3. The complex is composed of 4 channel subunits each of which binds to a calmodulin subunit which regulates the channel activity through calcium-binding. Interacts with calmodulin.

The protein localises to the membrane. The protein resides in the cytoplasm. Its subcellular location is the myofibril. It localises to the sarcomere. It is found in the z line. It carries out the reaction K(+)(in) = K(+)(out). Its activity is regulated as follows. Inhibited by bee venom neurotoxin apamin. Inhibited by d-tubocurarine and tetraethylammonium (TEA). Functionally, small conductance calcium-activated potassium channel that mediates the voltage-independent transmembrane transfer of potassium across the cell membrane through a constitutive interaction with calmodulin which binds the intracellular calcium allowing its opening. The current is characterized by a voltage-independent activation, an intracellular calcium concentration increase-dependent activation and a single-channel conductance of about 3 picosiemens. Also presents an inwardly rectifying current, thus reducing its already small outward conductance of potassium ions, which is particularly the case when the membrane potential displays positive values, above + 20 mV. Activation is followed by membrane hyperpolarization. Thought to regulate neuronal excitability by contributing to the slow component of synaptic afterhyperpolarization. This is Small conductance calcium-activated potassium channel protein 1 from Homo sapiens (Human).